The sequence spans 112 residues: Small ribosomal subunit protein bS6 (112 aa).

Belongs to the bacterial ribosomal protein bS6 family.

Functionally, binds together with bS18 to 16S ribosomal RNA. This is Small ribosomal subunit protein bS6 (rpsF) from Chlamydia pneumoniae (Chlamydophila pneumoniae).